A 433-amino-acid polypeptide reads, in one-letter code: ACT domain-containing protein ACR6 (433 aa).

ACT domains lie at 30–110 (VIQV…RSSV), 120–207 (SIEL…SCSD), 250–326 (VVTM…ASEG), and 328–402 (ELEL…VKKK).

May bind amino acids. The sequence is that of ACT domain-containing protein ACR6 from Arabidopsis thaliana (Mouse-ear cress).